The chain runs to 136 residues: DNA-directed RNA polymerase subunit omega (136 aa).

The disordered stretch occupies residues 81–136 (EAEAVPLLSSSPAAAAVAPQSSGDDGDIQFDRMSEEDLLRGLENLAPPTETEDEGD). Positions 83 to 99 (EAVPLLSSSPAAAAVAP) are enriched in low complexity. The segment covering 109–120 (QFDRMSEEDLLR) has biased composition (basic and acidic residues).

The protein belongs to the RNA polymerase subunit omega family. As to quaternary structure, the RNAP catalytic core consists of 2 alpha, 1 beta, 1 beta' and 1 omega subunit. When a sigma factor is associated with the core the holoenzyme is formed, which can initiate transcription.

It catalyses the reaction RNA(n) + a ribonucleoside 5'-triphosphate = RNA(n+1) + diphosphate. Its function is as follows. Promotes RNA polymerase assembly. Latches the N- and C-terminal regions of the beta' subunit thereby facilitating its interaction with the beta and alpha subunits. The sequence is that of DNA-directed RNA polymerase subunit omega from Methylobacterium nodulans (strain LMG 21967 / CNCM I-2342 / ORS 2060).